The chain runs to 533 residues: Capsid protein VP1 (533 aa).

The tract at residues 333 to 353 (TIDLQQNPVPQTSSSTTDSPQ) is disordered.

The protein belongs to the microviridae F protein family.

Its subcellular location is the virion. The protein resides in the host cytoplasm. Assembles to form an icosahedral capsid with a T=1 symmetry. This chain is Capsid protein VP1, found in Bdellovibrio bacteriovorus (Bacteriophage phiMH2K).